The primary structure comprises 75 residues: Small ribosomal subunit protein bS18 (75 aa).

The protein belongs to the bacterial ribosomal protein bS18 family. As to quaternary structure, part of the 30S ribosomal subunit. Forms a tight heterodimer with protein bS6.

In terms of biological role, binds as a heterodimer with protein bS6 to the central domain of the 16S rRNA, where it helps stabilize the platform of the 30S subunit. This is Small ribosomal subunit protein bS18 from Glaesserella parasuis serovar 5 (strain SH0165) (Haemophilus parasuis).